Reading from the N-terminus, the 146-residue chain is Hemoglobin subunit beta (146 aa).

Val-1 carries the N-acetylvaline modification. Residues 2-146 (HLTGEEKTAV…VANALAHKYH (145 aa)) enclose the Globin domain. The residue at position 12 (Thr-12) is a Phosphothreonine. Residue Ser-44 is modified to Phosphoserine. Lys-59 carries the post-translational modification N6-acetyllysine. Residue His-63 coordinates heme b. Lys-82 is modified (N6-acetyllysine). A heme b-binding site is contributed by His-92. The residue at position 93 (Cys-93) is an S-nitrosocysteine. Lys-144 is subject to N6-acetyllysine.

This sequence belongs to the globin family. As to quaternary structure, heterotetramer of two alpha chains and two beta chains. Red blood cells.

Its function is as follows. Involved in oxygen transport from the lung to the various peripheral tissues. The sequence is that of Hemoglobin subunit beta (HBB) from Nasua nasua (Ring-tailed coati).